We begin with the raw amino-acid sequence, 229 residues long: Platelet-activating factor acetylhydrolase IB subunit alpha2 (229 aa).

The residue at position 2 (serine 2) is an N-acetylserine. The residue at position 2 (serine 2) is a Phosphoserine. Residue serine 48 is part of the active site. At serine 64 the chain carries Phosphoserine. Residues aspartate 193 and histidine 196 contribute to the active site. Threonine 220 bears the Phosphothreonine mark.

This sequence belongs to the 'GDSL' lipolytic enzyme family. Platelet-activating factor acetylhydrolase IB beta/gamma subunits subfamily. In terms of assembly, forms a catalytic dimer which is either homodimer (alpha2/alpha2 homodimer) or heterodimer with PAFAH1B3 (alpha2/alpha1 heterodimer). Component of the cytosolic (PAF-AH (I)) heterotetrameric enzyme, which is composed of PAFAH1B1 (beta), PAFAH1B2 (alpha2) and PAFAH1B3 (alpha1) subunits. The catalytic activity of the enzyme resides in the alpha1 (PAFAH1B3) and alpha2 (PAFAH1B2) subunits, whereas the beta subunit (PAFAH1B1) has regulatory activity. Trimer formation is not essential for the catalytic activity. Interacts (homodimer form) with PAFAH1B1 (homodimer form); PAFAH1B2 competes with NDEL1 for PAFAH1B1 binding. Interacts with VLDLR; this interaction may modulate the Reelin pathway.

Its subcellular location is the cytoplasm. The catalysed reaction is a 1-O-alkyl-2-acetyl-sn-glycero-3-phosphocholine + H2O = a 1-O-alkyl-sn-glycero-3-phosphocholine + acetate + H(+). It catalyses the reaction 1-O-hexadecyl-2-acetyl-sn-glycero-3-phosphocholine + H2O = 1-O-hexadecyl-sn-glycero-3-phosphocholine + acetate + H(+). The enzyme catalyses 1-O-hexadecyl-2-acetyl-sn-glycero-3-phosphate + H2O = 1-O-hexadecyl-sn-glycero-3-phosphate + acetate + H(+). It carries out the reaction 1-O-hexadecyl-2-acetyl-sn-glycero-3-phosphoethanolamine + H2O = 1-O-hexadecyl-sn-glycero-3-phosphoethanolamine + acetate + H(+). Its activity is regulated as follows. Beta subunit (PAFAH1B1) stimulates the acetylhydrolase activity of the alpha2/alpha2 catalytic homodimer. In terms of biological role, alpha2 catalytic subunit of the cytosolic type I platelet-activating factor (PAF) acetylhydrolase (PAF-AH (I)) heterotetrameric enzyme that catalyzes the hydrolyze of the acetyl group at the sn-2 position of PAF and its analogs and modulates the action of PAF. The activity and substrate specificity of PAF-AH (I) are affected by its subunit composition. The alpha2/alpha2 homodimer (PAFAH1B2/PAFAH1B2 homodimer) hydrolyzes PAF and 1-O-alkyl-2-acetyl-sn-glycero-3-phosphorylethanolamine (AAGPE) more efficiently than 1-O-alkyl-2-acetyl-sn-glycero-3-phosphoric acid (AAGPA). In contrast, the alpha1/alpha2 heterodimer(PAFAH1B3/PAFAH1B3 heterodimer) hydrolyzes AAGPA more efficiently than PAF, but has little hydrolytic activity towards AAGPE. May play a role in male germ cell meiosis during the late pachytenestage and meiotic divisions as well as early spermiogenesis. In Mus musculus (Mouse), this protein is Platelet-activating factor acetylhydrolase IB subunit alpha2.